The primary structure comprises 137 residues: Basic phospholipase A2 homolog Cax-K49 (137 aa).

A signal peptide spans 1-16 (MRTFWIVAMLLVGVEG). Disulfide bonds link Cys42/Cys131, Cys44/Cys60, Cys59/Cys111, Cys65/Cys137, Cys66/Cys104, Cys73/Cys97, and Cys91/Cys102. The segment at 121 to 133 (KKYKIYPKFLCKK) is important for membrane-damaging activities in eukaryotes and bacteria; heparin-binding.

Homodimer; non-covalently linked. Expressed by the venom gland.

It localises to the secreted. Snake venom phospholipase A2 homolog that lacks enzymatic activity. Displays edema-inducing activities and may be myotoxic. A model of myotoxic mechanism has been proposed: an apo Lys49-PLA2 is activated by the entrance of a hydrophobic molecule (e.g. fatty acid) at the hydrophobic channel of the protein leading to a reorientation of a monomer. This reorientation causes a transition between 'inactive' to 'active' states, causing alignment of C-terminal and membrane-docking sites (MDoS) side-by-side and putting the membrane-disruption sites (MDiS) in the same plane, exposed to solvent and in a symmetric position for both monomers. The MDoS region stabilizes the toxin on membrane by the interaction of charged residues with phospholipid head groups. Subsequently, the MDiS region destabilizes the membrane with penetration of hydrophobic residues. This insertion causes a disorganization of the membrane, allowing an uncontrolled influx of ions (i.e. calcium and sodium), and eventually triggering irreversible intracellular alterations and cell death. The chain is Basic phospholipase A2 homolog Cax-K49 from Crotalus atrox (Western diamondback rattlesnake).